Consider the following 145-residue polypeptide: D-aminoacyl-tRNA deacylase (145 aa).

Positions 137-138 (GP) match the Gly-cisPro motif, important for rejection of L-amino acids motif.

It belongs to the DTD family. As to quaternary structure, homodimer.

Its subcellular location is the cytoplasm. The enzyme catalyses glycyl-tRNA(Ala) + H2O = tRNA(Ala) + glycine + H(+). It catalyses the reaction a D-aminoacyl-tRNA + H2O = a tRNA + a D-alpha-amino acid + H(+). An aminoacyl-tRNA editing enzyme that deacylates mischarged D-aminoacyl-tRNAs. Also deacylates mischarged glycyl-tRNA(Ala), protecting cells against glycine mischarging by AlaRS. Acts via tRNA-based rather than protein-based catalysis; rejects L-amino acids rather than detecting D-amino acids in the active site. By recycling D-aminoacyl-tRNA to D-amino acids and free tRNA molecules, this enzyme counteracts the toxicity associated with the formation of D-aminoacyl-tRNA entities in vivo and helps enforce protein L-homochirality. In Klebsiella pneumoniae subsp. pneumoniae (strain ATCC 700721 / MGH 78578), this protein is D-aminoacyl-tRNA deacylase.